The chain runs to 1086 residues: Ribonuclease 3 (1086 aa).

2 disordered regions span residues 1–77 (MSDE…DSPR) and 158–233 (CHSM…LRNF). Residues 13–23 (PKHKRARRKKY) show a composition bias toward basic residues. Positions 24–35 (QKEYQERHKEEM) are enriched in basic and acidic residues. Residues 43 to 53 (FQNQPSTSSAP) are compositionally biased toward polar residues. The segment covering 159 to 168 (HSMKGRKTPK) has biased composition (basic residues). Residues 181–190 (VSDDSNDSQD) show a composition bias toward acidic residues. Polar residues predominate over residues 191-201 (EASTSEPTNRQ). Residues 203-217 (PEADKTGEVKDEKQT) are compositionally biased toward basic and acidic residues. RNase III domains follow at residues 607 to 781 (LDVF…LDGG) and 833 to 957 (FHAL…VDRG). Positions 694, 767, 770, 873, 943, and 946 each coordinate Mg(2+). Residues 984 to 1059 (DAKSHLQQWC…AELALANLES (76 aa)) enclose the DRBM domain.

This sequence belongs to the ribonuclease III family. It depends on Mg(2+) as a cofactor. Requires Mn(2+) as cofactor.

It localises to the nucleus. The catalysed reaction is Endonucleolytic cleavage to 5'-phosphomonoester.. Executes the initial step of microRNA (miRNA) processing in the nucleus, that is the cleavage of pri-miRNA to release pre-miRNA. Involved in pre-rRNA processing. Cleaves double-strand RNA and does not cleave single-strand RNA. Involved in fertility. Required for the function or synthesis of the let-7 miRNA. The sequence is that of Ribonuclease 3 (drsh-1) from Caenorhabditis elegans.